The following is a 259-amino-acid chain: tRNA pseudouridine synthase A (259 aa).

Asp52 (nucleophile) is an active-site residue. Tyr113 contributes to the substrate binding site.

It belongs to the tRNA pseudouridine synthase TruA family. As to quaternary structure, homodimer.

The catalysed reaction is uridine(38/39/40) in tRNA = pseudouridine(38/39/40) in tRNA. Formation of pseudouridine at positions 38, 39 and 40 in the anticodon stem and loop of transfer RNAs. The chain is tRNA pseudouridine synthase A from Allorhizobium ampelinum (strain ATCC BAA-846 / DSM 112012 / S4) (Agrobacterium vitis (strain S4)).